Here is a 282-residue protein sequence, read N- to C-terminus: uncharacterized protein (282 aa).

The protein belongs to the glycosyltransferase 2 family. WaaE/KdtX subfamily.

This is an uncharacterized protein from Rickettsia conorii (strain ATCC VR-613 / Malish 7).